Consider the following 394-residue polypeptide: uncharacterized protein (394 aa).

It belongs to the mycobacterial PPE family.

This is an uncharacterized protein from Mycobacterium tuberculosis (strain CDC 1551 / Oshkosh).